Here is a 210-residue protein sequence, read N- to C-terminus: Pyridoxine/pyridoxamine 5'-phosphate oxidase (210 aa).

Residues arginine 7–tyrosine 10 and lysine 65 each bind substrate. FMN-binding positions include arginine 60–lysine 65, phenylalanine 75–threonine 76, arginine 81, lysine 82, and glutamine 104. Tyrosine 122, arginine 126, and serine 130 together coordinate substrate. Residues glutamine 139–serine 140 and tryptophan 182 each bind FMN. Arginine 188–histidine 190 contributes to the substrate binding site. Arginine 192 contacts FMN.

Belongs to the pyridoxamine 5'-phosphate oxidase family. Homodimer. Requires FMN as cofactor.

The catalysed reaction is pyridoxamine 5'-phosphate + O2 + H2O = pyridoxal 5'-phosphate + H2O2 + NH4(+). It carries out the reaction pyridoxine 5'-phosphate + O2 = pyridoxal 5'-phosphate + H2O2. Its pathway is cofactor metabolism; pyridoxal 5'-phosphate salvage; pyridoxal 5'-phosphate from pyridoxamine 5'-phosphate: step 1/1. It functions in the pathway cofactor metabolism; pyridoxal 5'-phosphate salvage; pyridoxal 5'-phosphate from pyridoxine 5'-phosphate: step 1/1. Its function is as follows. Catalyzes the oxidation of either pyridoxine 5'-phosphate (PNP) or pyridoxamine 5'-phosphate (PMP) into pyridoxal 5'-phosphate (PLP). This chain is Pyridoxine/pyridoxamine 5'-phosphate oxidase, found in Bordetella bronchiseptica (strain ATCC BAA-588 / NCTC 13252 / RB50) (Alcaligenes bronchisepticus).